The following is a 334-amino-acid chain: Glycerol-3-phosphate dehydrogenase [NAD(P)+] (334 aa).

Positions 11, 12, 32, and 106 each coordinate NADPH. Residues lysine 106 and glycine 136 each coordinate sn-glycerol 3-phosphate. Residue alanine 140 coordinates NADPH. Sn-glycerol 3-phosphate-binding residues include lysine 191, aspartate 244, serine 254, arginine 255, and asparagine 256. Residue lysine 191 is the Proton acceptor of the active site. Arginine 255 provides a ligand contact to NADPH. Residues valine 279 and glutamate 281 each coordinate NADPH.

This sequence belongs to the NAD-dependent glycerol-3-phosphate dehydrogenase family.

The protein resides in the cytoplasm. It catalyses the reaction sn-glycerol 3-phosphate + NAD(+) = dihydroxyacetone phosphate + NADH + H(+). The enzyme catalyses sn-glycerol 3-phosphate + NADP(+) = dihydroxyacetone phosphate + NADPH + H(+). It functions in the pathway membrane lipid metabolism; glycerophospholipid metabolism. Its function is as follows. Catalyzes the reduction of the glycolytic intermediate dihydroxyacetone phosphate (DHAP) to sn-glycerol 3-phosphate (G3P), the key precursor for phospholipid synthesis. In Parafrankia sp. (strain EAN1pec), this protein is Glycerol-3-phosphate dehydrogenase [NAD(P)+].